Reading from the N-terminus, the 412-residue chain is 5,5'-dehydrodivanillate O-demethylase ferredoxin reductase subunit (412 aa).

Ala14, Lys49, Val82, Arg130, Asp279, and Val298 together coordinate FAD.

The protein belongs to the FAD-dependent oxidoreductase family. As to quaternary structure, monomer. The three-component monooxygenase is composed of an oxygenase (LigXa), a ferredoxin (LigXc) and a ferredoxin reductase (LigXd). Requires FAD as cofactor.

The catalysed reaction is 5,5'-dehydrodivanillate + NADH + O2 + H(+) = 2,2',3-trihydroxy-3'-methoxy-5,5'-dicarboxybiphenyl + formaldehyde + NAD(+) + H2O. Involved in the catabolism of 5,5'-dehydrodivanillate (DDVA), an intermediate in the biodegradation of lignin. Part of a three-component monooxygenase that catalyzes the O-demethylation of DDVA, leading to the formation of 2,2',3-trihydroxy-3'-methoxy-5,5'-dicarboxybiphenyl (OH-DDVA). LigXd probably transfers the electrons from NADH to LigXc. In Sphingobium sp. (strain NBRC 103272 / SYK-6), this protein is 5,5'-dehydrodivanillate O-demethylase ferredoxin reductase subunit.